A 151-amino-acid polypeptide reads, in one-letter code: Prefoldin subunit alpha (151 aa).

Residues 120 to 151 (TVEEETASLEEKAQQAQQQQMQQLQQMQQEDE) form a disordered region. Residues 133–151 (QQAQQQQMQQLQQMQQEDE) show a composition bias toward low complexity.

This sequence belongs to the prefoldin subunit alpha family. Heterohexamer of two alpha and four beta subunits.

It is found in the cytoplasm. Its function is as follows. Molecular chaperone capable of stabilizing a range of proteins. Seems to fulfill an ATP-independent, HSP70-like function in archaeal de novo protein folding. The protein is Prefoldin subunit alpha of Natronomonas pharaonis (strain ATCC 35678 / DSM 2160 / CIP 103997 / JCM 8858 / NBRC 14720 / NCIMB 2260 / Gabara) (Halobacterium pharaonis).